The primary structure comprises 557 residues: Dihydroxy-acid dehydratase (557 aa).

Mg(2+) is bound at residue aspartate 78. Cysteine 119 contacts [2Fe-2S] cluster. Positions 120 and 121 each coordinate Mg(2+). Lysine 121 carries the N6-carboxylysine modification. Position 192 (cysteine 192) interacts with [2Fe-2S] cluster. Mg(2+) is bound at residue glutamate 443. The active-site Proton acceptor is serine 469.

The protein belongs to the IlvD/Edd family. Homodimer. The cofactor is [2Fe-2S] cluster. Mg(2+) is required as a cofactor.

The catalysed reaction is (2R)-2,3-dihydroxy-3-methylbutanoate = 3-methyl-2-oxobutanoate + H2O. The enzyme catalyses (2R,3R)-2,3-dihydroxy-3-methylpentanoate = (S)-3-methyl-2-oxopentanoate + H2O. The protein operates within amino-acid biosynthesis; L-isoleucine biosynthesis; L-isoleucine from 2-oxobutanoate: step 3/4. It functions in the pathway amino-acid biosynthesis; L-valine biosynthesis; L-valine from pyruvate: step 3/4. Functions in the biosynthesis of branched-chain amino acids. Catalyzes the dehydration of (2R,3R)-2,3-dihydroxy-3-methylpentanoate (2,3-dihydroxy-3-methylvalerate) into 2-oxo-3-methylpentanoate (2-oxo-3-methylvalerate) and of (2R)-2,3-dihydroxy-3-methylbutanoate (2,3-dihydroxyisovalerate) into 2-oxo-3-methylbutanoate (2-oxoisovalerate), the penultimate precursor to L-isoleucine and L-valine, respectively. The protein is Dihydroxy-acid dehydratase of Persephonella marina (strain DSM 14350 / EX-H1).